Reading from the N-terminus, the 433-residue chain is Type I acyl-CoA thioesterase mpaH' (433 aa).

The abhydrolase domain stretch occupies residues 58–246; sequence HGVGLPKELY…IKALFGTTAD (189 aa). Val-60 is a substrate binding site. Ser-139 serves as the catalytic Nucleophile. Phe-140 contacts substrate. Active-site residues include Asp-163 and His-365.

This sequence belongs to the AB hydrolase superfamily. MpaH hydrolase family. In terms of assembly, homodimer.

The protein localises to the peroxisome matrix. The catalysed reaction is mycophenolyl-CoA + H2O = mycophenolate + CoA + H(+). It functions in the pathway secondary metabolite biosynthesis; terpenoid biosynthesis. In terms of biological role, type I acyl-CoA thioesterase; part of the gene cluster that mediates the biosynthesis of mycophenolic acid (MPA), the first isolated antibiotic natural product in the world obtained from a culture of Penicillium brevicompactum in 1893. MpaH' acts as a peroxisomal acyl-CoA hydrolase that converts MPA-CoA into the final product MPA. The first step of the pathway is the synthesis of 5-methylorsellinic acid (5MOA) by the cytosolic polyketide synthase mpaC. 5MOA is then converted to the phthalide compound 5,7-dihydroxy-4,6-dimethylphthalide (DHMP) by the endoplasmic reticulum-bound cytochrome P450 monooxygenase mpaDE. MpaDE first catalyzes hydroxylation of 5-MOA to 4,6-dihydroxy-2-(hydroxymethyl)-3-methylbenzoic acid (DHMB). MpaDE then acts as a lactone synthase that catalyzes the ring closure to convert DHMB into DHMP. The next step is the prenylation of DHMP by the Golgi apparatus-associated prenyltransferase mpaA to yield farnesyl-DHMP (FDHMP). The ER-bound oxygenase mpaB then mediates the oxidative cleavage the C19-C20 double bond in FDHMP to yield FDHMP-3C via a mycophenolic aldehyde intermediate. The O-methyltransferase mpaG catalyzes the methylation of FDHMP-3C to yield MFDHMP-3C. After the cytosolic methylation of FDHMP-3C, MFDHMP-3C enters into peroxisomes probably via free diffusion due to its low molecular weight. Upon a peroxisomal CoA ligation reaction, catalyzed by a beta-oxidation component enzyme acyl-CoA ligase ACL891, MFDHMP-3C-CoA would then be restricted to peroxisomes for the following beta-oxidation pathway steps. The peroxisomal beta-oxidation machinery than converts MFDHMP-3C-CoA into MPA_CoA, via a beta-oxidation chain-shortening process. Finally mpaH acts as a peroxisomal acyl-CoA hydrolase with high substrate specificity toward MPA-CoA to release the final product MPA. The chain is Type I acyl-CoA thioesterase mpaH' from Penicillium brevicompactum.